The following is a 131-amino-acid chain: Small ribosomal subunit protein uS11 (131 aa).

The protein belongs to the universal ribosomal protein uS11 family. Part of the 30S ribosomal subunit.

In terms of biological role, located on the platform of the 30S subunit. This is Small ribosomal subunit protein uS11 from Haloquadratum walsbyi (strain DSM 16790 / HBSQ001).